The chain runs to 544 residues: Ribosomal oxygenase 1 (544 aa).

The disordered stretch occupies residues 1–78 (MERKHMSALS…HEGERDCREM (78 aa)). Positions 10–19 (SIYQSLSGGK) are enriched in polar residues. A compositionally biased stretch (basic residues) spans 42-53 (PSKKATKKKGTK). Residues 63 to 78 (SSEKEKHEGERDCREM) show a composition bias toward basic and acidic residues. In terms of domain architecture, JmjC spans 197 to 342 (CSIRMLNPQA…DLMLKLMPAA (146 aa)). Residues His-243, Asp-245, and His-308 each coordinate Fe cation.

It belongs to the ROX family. NO66 subfamily. Requires Fe(2+) as cofactor.

It is found in the nucleus. The protein resides in the nucleolus. It localises to the nucleoplasm. The enzyme catalyses N(6),N(6)-dimethyl-L-lysyl(36)-[histone H3] + 2 2-oxoglutarate + 2 O2 = L-lysyl(36)-[histone H3] + 2 formaldehyde + 2 succinate + 2 CO2. It catalyses the reaction N(6)-methyl-L-lysyl-[protein] + 2-oxoglutarate + O2 = L-lysyl-[protein] + formaldehyde + succinate + CO2. The catalysed reaction is L-histidyl-[protein] + 2-oxoglutarate + O2 = (3S)-3-hydroxy-L-histidyl-[protein] + succinate + CO2. In terms of biological role, oxygenase that can act as both a histone lysine demethylase and a ribosomal histidine hydroxylase. Specifically demethylates 'Lys-4' (H3K4me) and 'Lys-36' (H3K36me) of histone H3, thereby playing a central role in histone code. Preferentially demethylates trimethylated H3 'Lys-4' (H3K4me3) and monomethylated H3 'Lys-4' (H3K4me1) residues, while it has weaker activity for dimethylated H3 'Lys-36' (H3K36me2). Also catalyzes demethylation of non-histone proteins. Also catalyzes the hydroxylation of 60S ribosomal protein L8 on 'His-216', thereby playing a role in ribosome biogenesis. The chain is Ribosomal oxygenase 1 (riox1) from Danio rerio (Zebrafish).